The sequence spans 465 residues: Probable spore coat protein DDB_G0283555 (465 aa).

Positions 1 to 22 (MRINNLLVCLVLVFSTLSISNA) are cleaved as a signal peptide. Positions 35–153 (RNCDSLSEDQ…RYPVCKGGGG (119 aa)) constitute a DSCP-N domain. 7 consecutive Follistatin-like domains span residues 160–182 (PCKN…AYCV), 195–217 (LCKA…ACCV), 229–251 (LCDA…ANCV), 257–280 (ECEH…PHCQ), 287–309 (LCRN…PTCI), 318–340 (PCRD…PSCV), and 435–458 (LCEF…PVCL).

Functionally, may contribute to the structure of the coat at the interface between the middle, cellulosic layer and the outer, electron-dense, proteinaceous layer. This Dictyostelium discoideum (Social amoeba) protein is Probable spore coat protein DDB_G0283555.